Consider the following 250-residue polypeptide: UPF0524 protein C3orf70 homolog (250 aa).

The interval 201–250 (ESCDEDTEEGAELSSEEDYSPESSWEPDECTLLSPSQSDLEVIETIETTV) is disordered. Acidic residues predominate over residues 202–229 (SCDEDTEEGAELSSEEDYSPESSWEPDE).

The protein belongs to the UPF0524 family.

Its function is as follows. May play a role in neuronal and neurobehavioral development. This Bos taurus (Bovine) protein is UPF0524 protein C3orf70 homolog.